The chain runs to 270 residues: Diaminopimelate epimerase (270 aa).

Substrate contacts are provided by Asn15, Gln49, and Asn66. The Proton donor role is filled by Cys75. Substrate-binding positions include Gly76 to Asn77, Asn155, Asn187, and Glu204 to Arg205. Cys213 (proton acceptor) is an active-site residue. Residue Gly214–Ser215 participates in substrate binding.

This sequence belongs to the diaminopimelate epimerase family. As to quaternary structure, homodimer.

It localises to the cytoplasm. It carries out the reaction (2S,6S)-2,6-diaminopimelate = meso-2,6-diaminopimelate. Its pathway is amino-acid biosynthesis; L-lysine biosynthesis via DAP pathway; DL-2,6-diaminopimelate from LL-2,6-diaminopimelate: step 1/1. In terms of biological role, catalyzes the stereoinversion of LL-2,6-diaminopimelate (L,L-DAP) to meso-diaminopimelate (meso-DAP), a precursor of L-lysine and an essential component of the bacterial peptidoglycan. This Rickettsia massiliae (strain Mtu5) protein is Diaminopimelate epimerase.